A 189-amino-acid chain; its full sequence is RxLR effector protein CRE18 (189 aa).

An N-terminal signal peptide occupies residues 1 to 23; it reads MSKLFYAFAVLAVHVLTSSPTTA. Residues 47-68 carry the RxLR-dEER motif; that stretch reads RFLRSIHEGEDSLKPSAFSEER.

Belongs to the RxLR effector family.

The protein localises to the secreted. Its subcellular location is the host cytoplasm. The protein resides in the host nucleus. Its function is as follows. Effector that is involved in host plant infection. Contributes to virulence during the early infection stage, by inhibiting plant defense responses induced by both PAMP-triggered immunity (PTI) and effector-triggered immunity (ETI). In Phytophthora infestans (strain T30-4) (Potato late blight agent), this protein is RxLR effector protein CRE18.